Here is a 325-residue protein sequence, read N- to C-terminus: ATP phosphoribosyltransferase (325 aa).

Belongs to the ATP phosphoribosyltransferase family. Long subfamily. Mg(2+) is required as a cofactor.

The protein localises to the cytoplasm. It catalyses the reaction 1-(5-phospho-beta-D-ribosyl)-ATP + diphosphate = 5-phospho-alpha-D-ribose 1-diphosphate + ATP. The protein operates within amino-acid biosynthesis; L-histidine biosynthesis; L-histidine from 5-phospho-alpha-D-ribose 1-diphosphate: step 1/9. With respect to regulation, feedback inhibited by histidine. In terms of biological role, catalyzes the condensation of ATP and 5-phosphoribose 1-diphosphate to form N'-(5'-phosphoribosyl)-ATP (PR-ATP). Has a crucial role in the pathway because the rate of histidine biosynthesis seems to be controlled primarily by regulation of HisG enzymatic activity. In Bradyrhizobium sp. (strain ORS 278), this protein is ATP phosphoribosyltransferase.